The sequence spans 272 residues: Cell division protein FtsQ (272 aa).

The Cytoplasmic portion of the chain corresponds to 1-43; it reads MEYNPPNTRERIVARRQRMRRNSTEPVVPGWRWRLREGLRSGR. Residues 44–64 traverse the membrane as a helical segment; that stretch reads IVSGIVFVISCFALFYVLFSS. Residues 65–272 lie on the Extracellular side of the membrane; that stretch reads RFRVQTVEVV…FYQYRPDGSS (208 aa). The 68-residue stretch at 66-133 folds into the POTRA domain; that stretch reads FRVQTVEVVG…DRARIVIVER (68 aa).

The protein belongs to the FtsQ/DivIB family. FtsQ subfamily.

The protein resides in the cell membrane. Its function is as follows. Essential cell division protein. This is Cell division protein FtsQ from Chloroflexus aurantiacus (strain ATCC 29366 / DSM 635 / J-10-fl).